A 424-amino-acid chain; its full sequence is Anaerobic glycerol-3-phosphate dehydrogenase subunit B (424 aa).

This sequence belongs to the anaerobic G-3-P dehydrogenase subunit B family. In terms of assembly, composed of a catalytic GlpA/B dimer and of membrane bound GlpC. The cofactor is FMN.

The enzyme catalyses a quinone + sn-glycerol 3-phosphate = dihydroxyacetone phosphate + a quinol. It functions in the pathway polyol metabolism; glycerol degradation via glycerol kinase pathway; glycerone phosphate from sn-glycerol 3-phosphate (anaerobic route): step 1/1. Conversion of glycerol 3-phosphate to dihydroxyacetone. Uses fumarate or nitrate as electron acceptor. The sequence is that of Anaerobic glycerol-3-phosphate dehydrogenase subunit B from Yersinia enterocolitica serotype O:8 / biotype 1B (strain NCTC 13174 / 8081).